The sequence spans 464 residues: tRNA-2-methylthio-N(6)-dimethylallyladenosine synthase (464 aa).

An MTTase N-terminal domain is found at 19–135; sequence GSYWITTFGC…LENLLGKVDL (117 aa). Residues cysteine 28, cysteine 64, cysteine 98, cysteine 170, cysteine 174, and cysteine 177 each contribute to the [4Fe-4S] cluster site. The region spanning 156-394 is the Radical SAM core domain; sequence RESSICGWVN…DLVEKTARSR (239 aa). The region spanning 396-464 is the TRAM domain; sequence KRYINNIESV…PFSLTGELYL (69 aa).

This sequence belongs to the methylthiotransferase family. MiaB subfamily. As to quaternary structure, monomer. [4Fe-4S] cluster is required as a cofactor.

It localises to the cytoplasm. The enzyme catalyses N(6)-dimethylallyladenosine(37) in tRNA + (sulfur carrier)-SH + AH2 + 2 S-adenosyl-L-methionine = 2-methylsulfanyl-N(6)-dimethylallyladenosine(37) in tRNA + (sulfur carrier)-H + 5'-deoxyadenosine + L-methionine + A + S-adenosyl-L-homocysteine + 2 H(+). Functionally, catalyzes the methylthiolation of N6-(dimethylallyl)adenosine (i(6)A), leading to the formation of 2-methylthio-N6-(dimethylallyl)adenosine (ms(2)i(6)A) at position 37 in tRNAs that read codons beginning with uridine. The protein is tRNA-2-methylthio-N(6)-dimethylallyladenosine synthase of Prochlorococcus marinus (strain AS9601).